The primary structure comprises 1050 residues: MSSEESYRAILRYLTNEREPYAPGTEGNVKRKIRKAAACYVVRGGTLYYQRRQRHRKTFAELEVVLQPERRQGLIEAAHLGPGGTHHTRHQTWHDLSKTYWWRGILKQVKDYIKQCSKCQEKLDRSRPISDASEMLEELGLDLDSGEESNESEDDLSNFTSPPSTASKSSKKKPVSKHELVFVDTKGVVKRSSPKHCQAVLKQLNEQRLSNQFCDVTLLIEGEEYKAHKSVLSANSEYFRDLFIEKGAVSSHEAVVDLSGFCKASFLPLLEFAYTSVLSFDFCSMADVAVLARHLFMSEVLEICESVHKLMEEKQLTVYKKGEVQTVASTQDLAAHNGTTTPPGTRNEATTTLSGELGHCEIVLLVNGELPEAEQNGEPEQQPAPQASPEAEASVSPVEGIPEPHPEMGTASLAKESNQPESAVTREDGIVASVHPKISKENVTNASQEDSDTGNDTSPEDIGAKDCPDHSQSPGQPSKDEDTLTEATEKTDSGPDDDTYRSRLRQRSVNEGGYIRLHKGMEKKLQKRKAISKSAVQQVAQKLVQRGKKMKQPKRDAKESTEETAHKCGECGMVFPRRYAFIMHTLKHERARDYKCPLCKKQFQYSASLRAHLIRHTRKEAPTSSSSNSTSTEASGGSSEKGRTKREFICSICGRTLPKLYSLRIHMLKHTGVKPHACQVCGKTFIYKHGLKLHQSLHQSQKQFQCELCVKSFVTKRSLQEHMSIHTGESKYFCSICGKSFHRGSGLSKHLKKHQPKPEVRGYHCTQCEKSFFEARDLRQHMNKHLGVKPFQCQFCDKCYSWKKDWYSHVKSHSVTEPYRCNICGKEFYEKALFRRHVKKATHGKKGRAKQNLERVCDQCGRKFTQLREYRRHMNNHEGVKPFECLTCGVAWADARSLKRHVRTHTGERPYVCPVCSEAYIDARTLRKHMTKFHRDYVPCKIMLEKDTLQFHNQGTQVEHAVSILTADMQEQESSGPQELETVVVTGETMEVLEAVAATEECPSVSTLSDQSIMQVVNYVLAQQQGQKLSEVAEAIQTVEVEVAHMPEAE.

A compositionally biased stretch (acidic residues) spans leucine 143–leucine 156. Positions leucine 143–lysine 173 are disordered. Residues serine 157–lysine 168 are compositionally biased toward low complexity. A BTB domain is found at cysteine 214 to phenylalanine 282. 2 disordered regions span residues alanine 373 to tyrosine 514 and leucine 543 to glutamate 563. Residues glutamate 378–glutamate 399 are compositionally biased toward low complexity. Basic and acidic residues-rich tracts occupy residues serine 478–arginine 501 and proline 553–glutamate 563. 2 C2H2-type zinc fingers span residues histidine 566–histidine 588 and tyrosine 594–histidine 616. Positions threonine 617–lysine 641 are disordered. A compositionally biased stretch (low complexity) spans threonine 623–serine 638. 10 consecutive C2H2-type zinc fingers follow at residues phenylalanine 648–histidine 670, histidine 676–histidine 698, phenylalanine 704–histidine 726, tyrosine 732–histidine 754, tyrosine 763–histidine 785, phenylalanine 791–histidine 813, tyrosine 819–histidine 843, arginine 855–histidine 877, phenylalanine 883–histidine 905, and tyrosine 911–histidine 934.

Its subcellular location is the nucleus. The protein resides in the nucleolus. In terms of biological role, may be involved in transcriptional regulation. The polypeptide is Zinc finger and BTB domain-containing protein 11 (Mus musculus (Mouse)).